The sequence spans 445 residues: Bifunctional protein GlmU (445 aa).

The segment at 1-218 (MRALVLAAGK…LLEITGVNTR (218 aa)) is pyrophosphorylase. UDP-N-acetyl-alpha-D-glucosamine is bound by residues 6–9 (LAAG), lysine 20, glutamine 69, 74–75 (GT), 96–98 (YGD), glycine 134, glutamate 147, asparagine 162, and asparagine 216. A Mg(2+)-binding site is contributed by aspartate 98. Asparagine 216 is a Mg(2+) binding site. A linker region spans residues 219 to 239 (KTLVWLEEQLRMRKIEELLEN). An N-acetyltransferase region spans residues 240 to 445 (GVTILDPATT…GWVLKKRKEE (206 aa)). The UDP-N-acetyl-alpha-D-glucosamine site is built by arginine 321 and lysine 339. The active-site Proton acceptor is histidine 351. The UDP-N-acetyl-alpha-D-glucosamine site is built by tyrosine 354 and asparagine 365. Acetyl-CoA contacts are provided by residues alanine 368, 374 to 375 (NY), serine 393, alanine 411, and arginine 428.

In the N-terminal section; belongs to the N-acetylglucosamine-1-phosphate uridyltransferase family. This sequence in the C-terminal section; belongs to the transferase hexapeptide repeat family. In terms of assembly, homotrimer. The cofactor is Mg(2+).

It is found in the cytoplasm. The catalysed reaction is alpha-D-glucosamine 1-phosphate + acetyl-CoA = N-acetyl-alpha-D-glucosamine 1-phosphate + CoA + H(+). It carries out the reaction N-acetyl-alpha-D-glucosamine 1-phosphate + UTP + H(+) = UDP-N-acetyl-alpha-D-glucosamine + diphosphate. It functions in the pathway nucleotide-sugar biosynthesis; UDP-N-acetyl-alpha-D-glucosamine biosynthesis; N-acetyl-alpha-D-glucosamine 1-phosphate from alpha-D-glucosamine 6-phosphate (route II): step 2/2. The protein operates within nucleotide-sugar biosynthesis; UDP-N-acetyl-alpha-D-glucosamine biosynthesis; UDP-N-acetyl-alpha-D-glucosamine from N-acetyl-alpha-D-glucosamine 1-phosphate: step 1/1. Its pathway is bacterial outer membrane biogenesis; LPS lipid A biosynthesis. Its function is as follows. Catalyzes the last two sequential reactions in the de novo biosynthetic pathway for UDP-N-acetylglucosamine (UDP-GlcNAc). The C-terminal domain catalyzes the transfer of acetyl group from acetyl coenzyme A to glucosamine-1-phosphate (GlcN-1-P) to produce N-acetylglucosamine-1-phosphate (GlcNAc-1-P), which is converted into UDP-GlcNAc by the transfer of uridine 5-monophosphate (from uridine 5-triphosphate), a reaction catalyzed by the N-terminal domain. The chain is Bifunctional protein GlmU from Thermotoga petrophila (strain ATCC BAA-488 / DSM 13995 / JCM 10881 / RKU-1).